The following is a 112-amino-acid chain: U-scoloptoxin(16)-Er5a (112 aa).

The first 26 residues, 1–26 (MNTVSVVQFLAVGCAVFVLYGRGVFA), serve as a signal peptide directing secretion.

The protein belongs to the scoloptoxin-16 family. Contains 2 disulfide bonds. As to expression, expressed by the venom gland.

The protein localises to the secreted. In Ethmostigmus rubripes (Giant centipede), this protein is U-scoloptoxin(16)-Er5a.